We begin with the raw amino-acid sequence, 1140 residues long: uncharacterized protein (1140 aa).

A run of 2 helical transmembrane segments spans residues 8–28 (FLLFGFALGSFGWFVASSAFT) and 1098–1118 (IAITFTGSAALLSTIIASGVV).

It to M.pneumoniae MPN_375 (in the N-terminal section), M.pneumoniae MPN_374 (in the central section) and M.pneumoniae MPN_373 (in the C-terminal section).

The protein localises to the cell membrane. This is an uncharacterized protein from Mycoplasma pneumoniae (strain ATCC 29342 / M129 / Subtype 1) (Mycoplasmoides pneumoniae).